Consider the following 451-residue polypeptide: REST corepressor 3 (451 aa).

A disordered region spans residues M1–V55. Positions V55–T139 constitute an ELM2 domain. K76 participates in a covalent cross-link: Glycyl lysine isopeptide (Lys-Gly) (interchain with G-Cter in SUMO2). The SANT domain occupies P140–S191. The disordered stretch occupies residues A204–K275. S212 and S227 each carry phosphoserine. Residues E218–N240 show a composition bias toward basic and acidic residues. K249 is covalently cross-linked (Glycyl lysine isopeptide (Lys-Gly) (interchain with G-Cter in SUMO2)). Basic residues predominate over residues Q261–P273. The stretch at A293 to G329 forms a coiled coil. A disordered region spans residues F333 to H451. Over residues P349–T361 the composition is skewed to pro residues. Over residues R375 to L384 the composition is skewed to low complexity. Residues R401 and R413 each carry the asymmetric dimethylarginine modification. Polar residues predominate over residues V431–H451.

Belongs to the CoREST family.

It localises to the nucleus. Its function is as follows. May act as a component of a corepressor complex that represses transcription. This Mus musculus (Mouse) protein is REST corepressor 3 (Rcor3).